The following is a 240-amino-acid chain: Uridylate kinase (240 aa).

14-17 is a binding site for ATP; it reads KLSG. Gly-56 contributes to the UMP binding site. Residues Gly-57 and Arg-61 each coordinate ATP. UMP-binding positions include Asp-76 and 137-144; that span reads TGNPFFTT. 3 residues coordinate ATP: Thr-164, Tyr-170, and Asp-173.

Belongs to the UMP kinase family. As to quaternary structure, homohexamer.

The protein localises to the cytoplasm. It carries out the reaction UMP + ATP = UDP + ADP. The protein operates within pyrimidine metabolism; CTP biosynthesis via de novo pathway; UDP from UMP (UMPK route): step 1/1. With respect to regulation, inhibited by UTP. Its function is as follows. Catalyzes the reversible phosphorylation of UMP to UDP. The polypeptide is Uridylate kinase (Paracidovorax citrulli (strain AAC00-1) (Acidovorax citrulli)).